The following is a 962-amino-acid chain: AP2-associated protein kinase 1 (962 aa).

The residue at position 1 (Met1) is an N-acetylmethionine. Positions 1–11 (MKKFFDSRREQ) are enriched in basic and acidic residues. Positions 1-27 (MKKFFDSRREQGSSGLGSGSSGGGGSS) are disordered. Ser14 carries the post-translational modification Phosphoserine. A compositionally biased stretch (gly residues) spans 14-27 (SGLGSGSSGGGGSS). The Protein kinase domain maps to 46–314 (VTVDEVLAEG…QVSYFSFKLL (269 aa)). Residues 52-60 (LAEGGFALV) and Lys74 contribute to the ATP site. The Proton acceptor role is filled by Asp176. Phosphotyrosine is present on Tyr234. Position 235 is a phosphoserine (Ser235). Disordered regions lie at residues 325–515 (NSPI…QFQA) and 576–633 (PQAQ…RAGH). Residues Thr353 and Thr388 each carry the phosphothreonine modification. The residue at position 390 (Arg390) is an Omega-N-methylarginine. The segment covering 397 to 418 (PLPQATGPSNQPSLLASVSQPK) has biased composition (polar residues). The span at 419-434 (AQATPSQPLQSSQPKQ) shows a compositional bias: low complexity. Positions 435 to 444 (PQAPPTPQQT) are enriched in pro residues. Phosphothreonine is present on Thr440. Low complexity-rich tracts occupy residues 445–485 (PAPQ…QPQQ), 498–514 (QQQQPQQQQAQTQQQFQ), and 576–606 (PQAQPATAPQAAAAQEPQIQAPARQQPKVQT). Thr607 is modified (phosphothreonine). Residues 614–628 (GQKVGSLTPPSSPKT) are compositionally biased toward polar residues. Ser619 bears the Phosphoserine mark. Thr621 is subject to Phosphothreonine. Phosphoserine occurs at positions 624, 625, 638, and 651. Thr654 bears the Phosphothreonine mark. Low complexity predominate over residues 664 to 677 (ASLSKSKSATTTPS). The tract at residues 664–702 (ASLSKSKSATTTPSGSPRTSQQNVSNASEGSTWNPFDDD) is disordered. Polar residues predominate over residues 678–697 (GSPRTSQQNVSNASEGSTWN). Residues Ser732, Ser847, Ser938, and Ser939 each carry the phosphoserine modification. The tract at residues 824 to 961 (EKADAAVESL…SLLLVDQLID (138 aa)) is clathrin-binding domain (CBD). Disordered regions lie at residues 839–860 (PPVAQRLPSHTESVTSNRTDSL) and 925–946 (LITKNTQGGHSRNSSGSSESSL). Polar residues predominate over residues 846–860 (PSHTESVTSNRTDSL). Positions 932 to 945 (GGHSRNSSGSSESS) are enriched in low complexity.

It belongs to the protein kinase superfamily. Ser/Thr protein kinase family. In terms of assembly, interacts (via CBD domain) with clathrin. Interacts with AP-2 complex. Interacts with NUMB. Interacts with alpha-adaptin. Interacts with EPS15. Interacts with membrane-bound activated NOTCH1 but not with the inactive full-length form of NOTCH1. Preferentially interacts with monoubiquitinated activated NOTCH1 compared to the non-ubiquitinated form. Autophosphorylated.

It localises to the cell membrane. It is found in the membrane. The protein localises to the clathrin-coated pit. Its subcellular location is the presynapse. The catalysed reaction is L-seryl-[protein] + ATP = O-phospho-L-seryl-[protein] + ADP + H(+). It carries out the reaction L-threonyl-[protein] + ATP = O-phospho-L-threonyl-[protein] + ADP + H(+). Stimulated by clathrin. In terms of biological role, regulates clathrin-mediated endocytosis by phosphorylating the AP2M1/mu2 subunit of the adaptor protein complex 2 (AP-2) which ensures high affinity binding of AP-2 to cargo membrane proteins during the initial stages of endocytosis. Preferentially, may phosphorylate substrates on threonine residues. Regulates phosphorylation of other AP-2 subunits as well as AP-2 localization and AP-2-mediated internalization of ligand complexes. Phosphorylates NUMB and regulates its cellular localization, promoting NUMB localization to endosomes. Binds to and stabilizes the activated form of NOTCH1, increases its localization in endosomes and regulates its transcriptional activity. The chain is AP2-associated protein kinase 1 (Aak1) from Rattus norvegicus (Rat).